The following is a 527-amino-acid chain: Bacillolysin (527 aa).

An N-terminal signal peptide occupies residues 1 to 28 (MKKSYLATSLTLSIAVGVSGFTSVPAFA). The propeptide at 29 to 223 (KTKIDYHKQW…VINKYNMLDH (195 aa)) is activation peptide. Ca(2+)-binding residues include Asp276, Asp278, and Asp354. A Zn(2+)-binding site is contributed by His358. Residue Glu359 is part of the active site. The Zn(2+) site is built by His362 and Glu382. Ca(2+) contacts are provided by Asp393, Asn394, Asp396, Glu401, Tyr404, Thr405, and Asp411. The Proton donor role is filled by His442.

Belongs to the peptidase M4 family. Ca(2+) is required as a cofactor. The cofactor is Zn(2+).

Its subcellular location is the secreted. The catalysed reaction is Similar, but not identical, to that of thermolysin.. In terms of biological role, extracellular zinc metalloprotease. The polypeptide is Bacillolysin (npr) (Brevibacillus brevis (Bacillus brevis)).